The primary structure comprises 89 residues: Small ribosomal subunit protein uS15 (89 aa).

It belongs to the universal ribosomal protein uS15 family. As to quaternary structure, part of the 30S ribosomal subunit. Forms a bridge to the 50S subunit in the 70S ribosome, contacting the 23S rRNA.

In terms of biological role, one of the primary rRNA binding proteins, it binds directly to 16S rRNA where it helps nucleate assembly of the platform of the 30S subunit by binding and bridging several RNA helices of the 16S rRNA. Functionally, forms an intersubunit bridge (bridge B4) with the 23S rRNA of the 50S subunit in the ribosome. The chain is Small ribosomal subunit protein uS15 from Nostoc punctiforme (strain ATCC 29133 / PCC 73102).